A 355-amino-acid polypeptide reads, in one-letter code: UPF0324 membrane protein PA5383 (355 aa).

10 helical membrane-spanning segments follow: residues 20-37, 44-66, 71-93, 100-122, 137-159, 166-188, 233-255, 275-297, 307-324, and 331-353; these read IPGLLLSAALAGVAILLG, HNGISALTLAIVLGILVGNTLYP, GSAAGVGFSKQILLRAGIILYGL, IAGVGLHGVLLDALMLASTFGLA, TLLIGAGSSICGAAAVMATEPVV, VAVAVSTVVVFGTLGIFLYPALF, AVIAKMVRVMMLAPFLILLSAWL, WFAVGFVLVAGLNSLVSLPPALV, LLAMAMAGLGLGTHLSAI, and PLLLAALLFAWLVLGGGFLTRLA.

It belongs to the UPF0324 family.

It localises to the cell membrane. The polypeptide is UPF0324 membrane protein PA5383 (Pseudomonas aeruginosa (strain ATCC 15692 / DSM 22644 / CIP 104116 / JCM 14847 / LMG 12228 / 1C / PRS 101 / PAO1)).